Here is a 160-residue protein sequence, read N- to C-terminus: Triabin (160 aa).

The N-terminal stretch at Met-1 to Ala-18 is a signal peptide. 3 cysteine pairs are disulfide-bonded: Cys-24–Cys-128, Cys-57–Cys-160, and Cys-87–Cys-102.

Belongs to the calycin superfamily. Triabin family. In terms of tissue distribution, expressed in salivary glands.

It localises to the secreted. In terms of biological role, thrombin inhibitor. Forms a non-covalent complex with thrombin at a molar ratio of 1:1. Inhibits thrombin-induced platelet aggregation. Prolongs thrombin clotting time and activated partial thromboplastin time. It only minimally suppresses the amidolytic activity of thrombin. Inhibits thrombin-mediated fibrin formation in the host. Inhibits thrombin-induced endothelium-dependent relaxant and contractile responses in host blood vessels. Inhibits thrombin-induced mitogenesis in host vascular smooth muscle cells. The protein is Triabin of Meccus pallidipennis (Triatomine bug).